Here is a 685-residue protein sequence, read N- to C-terminus: Sulfite reductase [ferredoxin], chloroplastic (685 aa).

A chloroplast-targeting transit peptide spans methionine 1 to alanine 51. [4Fe-4S] cluster is bound by residues cysteine 495, cysteine 501, cysteine 541, and cysteine 545. Residue cysteine 545 participates in siroheme binding.

Belongs to the nitrite and sulfite reductase 4Fe-4S domain family. Monomer. Interacts with ferredoxin. Siroheme is required as a cofactor. It depends on [4Fe-4S] cluster as a cofactor. Post-translationally, phosphorylated; this phosphorylation reduces DNA-binding. In terms of tissue distribution, expressed in leaves, stems, and roots.

The protein resides in the plastid. It is found in the chloroplast stroma. Its subcellular location is the chloroplast nucleoid. It localises to the plastid stroma. The catalysed reaction is hydrogen sulfide + 6 oxidized [2Fe-2S]-[ferredoxin] + 3 H2O = sulfite + 6 reduced [2Fe-2S]-[ferredoxin] + 7 H(+). Essential protein with sulfite reductase activity required in assimilatory sulfate reduction pathway during both primary and secondary metabolism and thus involved in development and growth. In terms of biological role, DNA-binding protein that binds to both double-stranded and single-stranded DNA without significant sequence specificity to reversibly repress the transcriptional activity of chloroplast nucleoids by promoting DNA compaction and possibly regulate DNA replication. This is Sulfite reductase [ferredoxin], chloroplastic (SIR) from Pisum sativum (Garden pea).